A 348-amino-acid polypeptide reads, in one-letter code: Phosphatidylinositol 3,4,5-trisphosphate 3-phosphatase ptn1 (348 aa).

Residues 18-189 (EKVNRSFAYL…YYIEILKQFP (172 aa)) form the Phosphatase tensin-type domain. Cysteine 129 serves as the catalytic Phosphocysteine intermediate.

The protein resides in the cytoplasmic vesicle. It carries out the reaction a 1,2-diacyl-sn-glycero-3-phospho-(1D-myo-inositol-3,4,5-trisphosphate) + H2O = a 1,2-diacyl-sn-glycero-3-phospho-(1D-myo-inositol-4,5-bisphosphate) + phosphate. The catalysed reaction is 1,2-dioctanoyl-sn-glycero-3-phospho-(1D-myo-inositol-3,4,5-trisphosphate) + H2O = 1,2-dioctanoyl-sn-glycero-3-phospho-(1D-myo-inositol-4,5-bisphosphate) + phosphate. The enzyme catalyses 1,2-dihexadecanoyl-sn-glycero-3-phospho-(1D-myo-inositol-3,4,5-trisphosphate) + H2O = 1,2-dihexadecanoyl-sn-glycero-3-phospho-(1D-myo-inositol-4,5-bisphosphate) + phosphate. Acts as a phosphoinositide 3-phosphatase and regulates PtdIns(3,4,5)P3 levels. This is Phosphatidylinositol 3,4,5-trisphosphate 3-phosphatase ptn1 (ptn1) from Schizosaccharomyces pombe (strain 972 / ATCC 24843) (Fission yeast).